The chain runs to 474 residues: bZIP transcription factor hapX (474 aa).

The span at 1–10 (MSTSAGTPTS) shows a compositional bias: polar residues. Residues 1 to 82 (MSTSAGTPTS…RKAQNRAAQR (82 aa)) are disordered. Positions 67 to 108 (DTPPTKRKAQNRAAQRAFRERRAARVGELEEQIKKIEEENER) constitute a bZIP domain. The basic motif stretch occupies residues 72–91 (KRKAQNRAAQRAFRERRAAR). The interval 95 to 102 (LEEQIKKI) is leucine-zipper. Disordered regions lie at residues 201–242 (QMQT…TDFT), 282–317 (EDQP…GDVL), and 429–449 (TLPN…LTNR). Residues 287 to 307 (DRSNQPSQLTKLPPIQNISQF) are compositionally biased toward polar residues.

Belongs to the bZIP family. YAP subfamily.

It localises to the nucleus. Iron regulator crucial for the adaptation to iron starvation and iron excess, but is dispensable for virulence. SreA represses the expression of hapX and the siderophore system during iron sufficient conditions by an iron-sensing mechanism, while hapX represses sreA and activates the siderophore system during iron-limiting conditions, resulting in efficient iron uptake and inhibition of iron-consuming pathways. HapX targets include genes encoding a number of key iron-regulated factors such as the vacuolar iron importer cccA, as well as hemA, cycA and lysF involved in heme biosynthesis, respiration and lysine biosynthesis, respectively. Activation of the vacuolar iron importer cccA during high iron conditions is essential for iron detoxification. In Arthroderma benhamiae (strain ATCC MYA-4681 / CBS 112371) (Trichophyton mentagrophytes), this protein is bZIP transcription factor hapX.